The primary structure comprises 516 residues: Histidine ammonia-lyase 1 (516 aa).

A cross-link (5-imidazolinone (Ser-Gly)) is located at residues 147 to 149 (SSG). Residue serine 148 is modified to 2,3-didehydroalanine (Ser).

This sequence belongs to the PAL/histidase family. Contains an active site 4-methylidene-imidazol-5-one (MIO), which is formed autocatalytically by cyclization and dehydration of residues Ser-Ser-Gly.

The protein localises to the cytoplasm. It catalyses the reaction L-histidine = trans-urocanate + NH4(+). It functions in the pathway amino-acid degradation; L-histidine degradation into L-glutamate; N-formimidoyl-L-glutamate from L-histidine: step 1/3. The chain is Histidine ammonia-lyase 1 (hutH1) from Fusobacterium nucleatum subsp. nucleatum (strain ATCC 25586 / DSM 15643 / BCRC 10681 / CIP 101130 / JCM 8532 / KCTC 2640 / LMG 13131 / VPI 4355).